The chain runs to 200 residues: Probable molybdenum cofactor guanylyltransferase (200 aa).

GTP is bound by residues 9 to 11 (LAG), K21, D69, and D100. A Mg(2+)-binding site is contributed by D100.

It belongs to the MobA family. Requires Mg(2+) as cofactor.

The protein localises to the cytoplasm. The catalysed reaction is Mo-molybdopterin + GTP + H(+) = Mo-molybdopterin guanine dinucleotide + diphosphate. In terms of biological role, transfers a GMP moiety from GTP to Mo-molybdopterin (Mo-MPT) cofactor (Moco or molybdenum cofactor) to form Mo-molybdopterin guanine dinucleotide (Mo-MGD) cofactor. This chain is Probable molybdenum cofactor guanylyltransferase, found in Bacillus thuringiensis (strain Al Hakam).